A 147-amino-acid chain; its full sequence is Lysozyme C (147 aa).

A signal peptide spans 1–17 (MRSLLILVLCFLPLAAP). Residues 19-147 (KVYGRCELAA…VNVWIRGCRL (129 aa)) form the C-type lysozyme domain. Cystine bridges form between Cys24–Cys145, Cys48–Cys133, Cys82–Cys98, and Cys94–Cys112. Residues Glu53 and Asp70 contribute to the active site.

The protein belongs to the glycosyl hydrolase 22 family. As to quaternary structure, monomer. By an evolutionary shift in the site of proteolytic cleavage of prelysozyme, Gly-18 became the N-terminal residue of the mature protein instead of being the C-terminal residue of the signal sequence as in other birds.

The protein localises to the secreted. It carries out the reaction Hydrolysis of (1-&gt;4)-beta-linkages between N-acetylmuramic acid and N-acetyl-D-glucosamine residues in a peptidoglycan and between N-acetyl-D-glucosamine residues in chitodextrins.. Functionally, lysozymes have primarily a bacteriolytic function; those in tissues and body fluids are associated with the monocyte-macrophage system and enhance the activity of immunoagents. The polypeptide is Lysozyme C (LYZ) (Phasianus colchicus colchicus (Black-necked pheasant)).